We begin with the raw amino-acid sequence, 159 residues long: uncharacterized protein (159 aa).

2 consecutive transmembrane segments (helical) span residues 17-37 (ALFISAVLGLFCGLSFFTILV) and 40-60 (LLQFVFFFVIGLLIEYIFKKY).

Its subcellular location is the cell membrane. This is an uncharacterized protein from Borreliella burgdorferi (strain ATCC 35210 / DSM 4680 / CIP 102532 / B31) (Borrelia burgdorferi).